Here is a 313-residue protein sequence, read N- to C-terminus: Porphobilinogen deaminase (313 aa).

Cys-242 carries the S-(dipyrrolylmethanemethyl)cysteine modification.

The protein belongs to the HMBS family. In terms of assembly, monomer. It depends on dipyrromethane as a cofactor.

The enzyme catalyses 4 porphobilinogen + H2O = hydroxymethylbilane + 4 NH4(+). Its pathway is porphyrin-containing compound metabolism; protoporphyrin-IX biosynthesis; coproporphyrinogen-III from 5-aminolevulinate: step 2/4. Tetrapolymerization of the monopyrrole PBG into the hydroxymethylbilane pre-uroporphyrinogen in several discrete steps. The sequence is that of Porphobilinogen deaminase from Enterobacter sp. (strain 638).